The sequence spans 419 residues: E3 ubiquitin-protein ligase RNFT1 (419 aa).

Residues 1-120 (MKLRAQFDRG…SGESDLESGE (120 aa)) form a disordered region. 2 stretches are compositionally biased toward polar residues: residues 31–44 (EPSSREGNGLSLTL) and 72–82 (GSSSGSTNGRG). Residues 84–102 (TSRRMRTASHSHSHTHGHG) are compositionally biased toward basic residues. A run of 6 helical transmembrane segments spans residues 141-161 (FIVILCAKLVIQHALGLAVAV), 187-207 (LHCAWLLLFLTSSSLLVFYTF), 217-237 (FFANATIDYHNFWEVLWSVGV), 240-260 (FILKFIFMGFKCLILLVPCPL), 270-290 (YMLIEEVGQLYQVIAPVPLWF), and 303-323 (VGLTLGILLALLYLIMKLLAL). A required for ubiquitin ligase activity and for protection against ER stress-induced cell death region spans residues 352–403 (IREAGDICPICQADFKQPRVLVCQHIFCEECIAQWLNQERTCPLCRTVITDK). Residues 359–397 (CPICQADFKQPRVLVCQHIFCEECIAQWLNQERTCPLCR) form an RING-type zinc finger.

It is found in the endoplasmic reticulum membrane. It carries out the reaction S-ubiquitinyl-[E2 ubiquitin-conjugating enzyme]-L-cysteine + [acceptor protein]-L-lysine = [E2 ubiquitin-conjugating enzyme]-L-cysteine + N(6)-ubiquitinyl-[acceptor protein]-L-lysine.. Its pathway is protein modification; protein ubiquitination. Functionally, E3 ubiquitin-protein ligase that acts in the endoplasmic reticulum (ER)-associated degradation (ERAD) pathway, which targets misfolded proteins that accumulate in the endoplasmic reticulum (ER) for ubiquitination and subsequent proteasome-mediated degradation. Protects cells from ER stress-induced apoptosis. This is E3 ubiquitin-protein ligase RNFT1 (rnft1) from Danio rerio (Zebrafish).